We begin with the raw amino-acid sequence, 137 residues long: Basic phospholipase A2 homolog Cax-K49 (137 aa).

The signal sequence occupies residues 1-16; sequence MRTFWIVAMLLVGVEG. Cystine bridges form between Cys-42/Cys-131, Cys-44/Cys-60, Cys-59/Cys-111, Cys-65/Cys-137, Cys-66/Cys-104, Cys-73/Cys-97, and Cys-91/Cys-102. Residues 121 to 133 are important for membrane-damaging activities in eukaryotes and bacteria; heparin-binding; that stretch reads KKYKIYPKFLCKK.

As to quaternary structure, homodimer; non-covalently linked. Expressed by the venom gland.

The protein localises to the secreted. Its function is as follows. Snake venom phospholipase A2 homolog that lacks enzymatic activity. Displays edema-inducing activities and may be myotoxic. A model of myotoxic mechanism has been proposed: an apo Lys49-PLA2 is activated by the entrance of a hydrophobic molecule (e.g. fatty acid) at the hydrophobic channel of the protein leading to a reorientation of a monomer. This reorientation causes a transition between 'inactive' to 'active' states, causing alignment of C-terminal and membrane-docking sites (MDoS) side-by-side and putting the membrane-disruption sites (MDiS) in the same plane, exposed to solvent and in a symmetric position for both monomers. The MDoS region stabilizes the toxin on membrane by the interaction of charged residues with phospholipid head groups. Subsequently, the MDiS region destabilizes the membrane with penetration of hydrophobic residues. This insertion causes a disorganization of the membrane, allowing an uncontrolled influx of ions (i.e. calcium and sodium), and eventually triggering irreversible intracellular alterations and cell death. The chain is Basic phospholipase A2 homolog Cax-K49 from Crotalus atrox (Western diamondback rattlesnake).